The following is a 146-amino-acid chain: Prefoldin subunit alpha (146 aa).

Belongs to the prefoldin alpha subunit family. In terms of assembly, heterohexamer of two alpha and four beta subunits.

The protein localises to the cytoplasm. In terms of biological role, molecular chaperone capable of stabilizing a range of proteins. Seems to fulfill an ATP-independent, HSP70-like function in archaeal de novo protein folding. The polypeptide is Prefoldin subunit alpha (Methanococcus vannielii (strain ATCC 35089 / DSM 1224 / JCM 13029 / OCM 148 / SB)).